The following is a 219-amino-acid chain: Translation initiation factor 6 (219 aa).

Belongs to the eIF-6 family.

Functionally, binds to the 50S ribosomal subunit and prevents its association with the 30S ribosomal subunit to form the 70S initiation complex. The sequence is that of Translation initiation factor 6 from Methanosarcina mazei (strain ATCC BAA-159 / DSM 3647 / Goe1 / Go1 / JCM 11833 / OCM 88) (Methanosarcina frisia).